The primary structure comprises 401 residues: Probable trafficking protein particle complex subunit 13 homolog (401 aa).

The protein belongs to the TRAPPC13 family.

The sequence is that of Probable trafficking protein particle complex subunit 13 homolog from Caenorhabditis elegans.